The sequence spans 447 residues: 2-oxoadipate dioxygenase/decarboxylase (447 aa).

2-oxoadipate is bound by residues His68, Arg72, and His224. Residue His68 coordinates Fe(2+). The Fe(2+) site is built by His224 and Glu290. Val391 contacts 2-oxoadipate.

It belongs to the 2-oxoadipate dioxygenase/decarboxylase family. Requires Fe(2+) as cofactor.

The catalysed reaction is 2-oxoadipate + O2 = (R)-2-hydroxyglutarate + CO2. Catalyzes the decarboxylation and hydroxylation of 2-oxoadipate (2OA) to form D-2-hydroxyglutarate (D-2-HGA). This is 2-oxoadipate dioxygenase/decarboxylase (ydcJ) from Escherichia coli (strain K12).